The primary structure comprises 275 residues: Methylglyoxal reductase DkgA (275 aa).

Tyrosine 51 (proton donor) is an active-site residue. Histidine 107 provides a ligand contact to substrate. NADP(+) is bound at residue 187–241; the sequence is SPLAQGGKGVFDQKVIRDLADKYGKTPAQIVIRWHLDSGLVVIPKSVTPSRIAEN.

This sequence belongs to the aldo/keto reductase family. In terms of assembly, monomer.

Its subcellular location is the cytoplasm. The enzyme catalyses hydroxyacetone + NADP(+) = methylglyoxal + NADPH + H(+). The catalysed reaction is a primary alcohol + NADP(+) = an aldehyde + NADPH + H(+). It carries out the reaction 2-dehydro-L-idonate + NADP(+) = 2,5-didehydro-D-gluconate + NADPH + H(+). Functionally, aldo-keto reductase that significantly contributes to cellular methylglyoxal detoxification by catalyzing the NADPH-dependent conversion of methylglyoxal to acetol. It also exhibits fairly high activity with glyoxal. Shows broad specificity and can use aromatic aldehydes such as 4-nitrobenzaldehyde, 3-nitrobenzaldehyde and benzaldehyde, and phenylglyoxal. Shows beta-keto ester reductase activity toward ethyl acetoacetate and a variety of 2-substituted derivatives. Also catalyzes the reduction of 2,5-diketo-D-gluconic acid (25DKG) to 2-keto-L-gulonic acid (2KLG) and could be involved in ketogluconate metabolism. However, the specific activity of the enzyme toward 2,5-diketo-D-gluconate was reported to be almost 400-fold lower than its activity toward methylglyoxal. Can catalyze in vitro the NADPH-dependent reduction of furfural, a natural product of lignocellulosic decomposition, to the less toxic product, furfuryl alcohol. However, it is unlikely that furfural is a physiological substrate. The chain is Methylglyoxal reductase DkgA from Escherichia coli (strain K12).